Consider the following 464-residue polypeptide: 3-isopropylmalate dehydratase large subunit (464 aa).

Residues C337, C397, and C400 each coordinate [4Fe-4S] cluster.

This sequence belongs to the aconitase/IPM isomerase family. LeuC type 1 subfamily. Heterodimer of LeuC and LeuD. [4Fe-4S] cluster is required as a cofactor.

It catalyses the reaction (2R,3S)-3-isopropylmalate = (2S)-2-isopropylmalate. It functions in the pathway amino-acid biosynthesis; L-leucine biosynthesis; L-leucine from 3-methyl-2-oxobutanoate: step 2/4. Functionally, catalyzes the isomerization between 2-isopropylmalate and 3-isopropylmalate, via the formation of 2-isopropylmaleate. In Bacillus thuringiensis (strain Al Hakam), this protein is 3-isopropylmalate dehydratase large subunit.